The chain runs to 292 residues: Cyclin-dependent-like kinase 5 (292 aa).

In terms of domain architecture, Protein kinase spans Tyr-4 to Phe-286. Residues Ile-10–Val-18 and Lys-33 contribute to the ATP site. The Proton acceptor role is filled by Asp-126. Mg(2+)-binding residues include Asn-131 and Asp-144.

Belongs to the protein kinase superfamily. CMGC Ser/Thr protein kinase family. CDC2/CDKX subfamily. As to quaternary structure, heterodimer composed of a catalytic subunit cdk-5 and a regulatory subunit cdka-1. Interaction with cdka-1 is required for cdk-5 activation. The cofactor is Mg(2+).

It is found in the cytoplasm. Its subcellular location is the cell projection. The protein resides in the dendrite. It carries out the reaction L-seryl-[protein] + ATP = O-phospho-L-seryl-[protein] + ADP + H(+). It catalyses the reaction L-threonyl-[protein] + ATP = O-phospho-L-threonyl-[protein] + ADP + H(+). In terms of biological role, proline-directed serine/threonine-protein kinase which, in several motor neurons, promotes the polarized trafficking of synaptic vesicles and dense-core vesicles (DCV). In the ventral nerve cord, phosphorylates lin-10 and thereby prevents lin-10-mediated anterograde trafficking of the glutamate receptor glr-1. Involved in the inhibition of glr-1 trafficking in hypoxic conditions. In DA motor neurons but not in DB motor neurons, regulates axonal transport of synaptic vesicle precursors by inhibiting dynein-mediated retrograde transport. Regulates the trafficking of dense-core vesicles in DA and DB motor neurons by promoting anterograde trafficking to the axon and preventing dynein-dependent trafficking to the dendrite. May regulate these processes in association with cdka-1/p35. Activity may be regulated by cyy-1. Involved in synapse formation during DD motor neuron remodeling by regulating transport of disassembled synaptic material to the new synaptic sites probably by activating the motor protein unc-104/kinesin-3. Regulates microtubule polarity in the dendrite of DB motor neurons. May also play a role in GABAergic synaptic vesicle localization in the ventral nerve cord. The protein is Cyclin-dependent-like kinase 5 of Caenorhabditis elegans.